A 109-amino-acid polypeptide reads, in one-letter code: Large ribosomal subunit protein uL24 (109 aa).

The protein belongs to the universal ribosomal protein uL24 family. As to quaternary structure, part of the 50S ribosomal subunit.

Functionally, one of two assembly initiator proteins, it binds directly to the 5'-end of the 23S rRNA, where it nucleates assembly of the 50S subunit. One of the proteins that surrounds the polypeptide exit tunnel on the outside of the subunit. The sequence is that of Large ribosomal subunit protein uL24 from Syntrophotalea carbinolica (strain DSM 2380 / NBRC 103641 / GraBd1) (Pelobacter carbinolicus).